Here is a 768-residue protein sequence, read N- to C-terminus: Valine--tRNA ligase (768 aa).

Positions 37-47 (PTVSGKMHMGH) match the 'HIGH' region motif. Positions 510–514 (KMSKS) match the 'KMSKS' region motif. An ATP-binding site is contributed by Lys513.

Belongs to the class-I aminoacyl-tRNA synthetase family. ValS type 2 subfamily.

It is found in the cytoplasm. The catalysed reaction is tRNA(Val) + L-valine + ATP = L-valyl-tRNA(Val) + AMP + diphosphate. Catalyzes the attachment of valine to tRNA(Val). As ValRS can inadvertently accommodate and process structurally similar amino acids such as threonine, to avoid such errors, it has a 'posttransfer' editing activity that hydrolyzes mischarged Thr-tRNA(Val) in a tRNA-dependent manner. This Picrophilus torridus (strain ATCC 700027 / DSM 9790 / JCM 10055 / NBRC 100828 / KAW 2/3) protein is Valine--tRNA ligase.